Here is a 264-residue protein sequence, read N- to C-terminus: Probable aquaporin TIP3-1 (264 aa).

2 helical membrane-spanning segments follow: residues 28–48 and 62–82; these read AAISEFLATAIFVFAAEGSIL and GLVAVSLAHALALAVAVAVAV. An NPA 1 motif is present at residues 90–92; sequence NPA. 3 helical membrane passes run 105–125, 149–169, and 176–196; these read LIRALFYWLAQLLGAVVATLL, AVLLEATMTFGLMYAYYATVI, and VGTIAPLAVGFLLGANMLAGG. The NPA 2 signature appears at 204–206; that stretch reads NPA. Residues 224-244 form a helical membrane-spanning segment; the sequence is YWLGPFVGAGLAGLLYEYLVI.

This sequence belongs to the MIP/aquaporin (TC 1.A.8) family. TIP (TC 1.A.8.10) subfamily. As to expression, expressed in leaves and at lower levels in roots.

It localises to the vacuole membrane. Functionally, aquaporins facilitate the transport of water and small neutral solutes across cell membranes. May be involved in transport from the vacuolar compartment to the cytoplasm. The chain is Probable aquaporin TIP3-1 (TIP3-1) from Oryza sativa subsp. japonica (Rice).